The sequence spans 1495 residues: Pregnancy zone protein (1495 aa).

Residues 1–24 (MRRNQLPTPAFLLLFLLLPRDATT) form the signal peptide. The cysteines at positions 48 and 86 are disulfide-linked. Residues Asn55 and Asn157 are each glycosylated (N-linked (GlcNAc...) asparagine). 2 disulfides stabilise this stretch: Cys249–Cys298 and Cys267–Cys286. Asn382, Asn405, and Asn412 each carry an N-linked (GlcNAc...) asparagine glycan. Cys469 and Cys562 are oxidised to a cystine. A glycan (N-linked (GlcNAc...) asparagine) is linked at Asn568. 6 cysteine pairs are disulfide-bonded: Cys594–Cys783, Cys642–Cys689, Cys833–Cys861, Cys859–Cys895, Cys933–Cys1339, and Cys1092–Cys1140. A bait region region spans residues 686–744 (PRFCQEFQHYPAMGGVAPQALAVAASGPGSSFRAMGVPMMGLDYSDEINQVVEVRETVR). 2 N-linked (GlcNAc...) asparagine glycosylation sites follow: Asn881 and Asn942. A cross-link (isoglutamyl cysteine thioester (Cys-Gln)) is located at residues 984-987 (CGEQ). Asn1003 carries an N-linked (GlcNAc...) asparagine glycan. N-linked (GlcNAc...) asparagine glycosylation is found at Asn1385 and Asn1443.

It belongs to the protease inhibitor I39 (alpha-2-macroglobulin) family. In terms of tissue distribution, highest expression in liver, medium expression in ovary, heart and stomach. Low expression in lung, kidney and uterus. Protein found in plasma.

It localises to the secreted. Functionally, is able to inhibit all four classes of proteinases by a unique 'trapping' mechanism. This protein has a peptide stretch, called the 'bait region' which contains specific cleavage sites for different proteinases. When a proteinase cleaves the bait region, a conformational change is induced in the protein which traps the proteinase. The entrapped enzyme remains active against low molecular weight substrates (activity against high molecular weight substrates is greatly reduced). Following cleavage in the bait region, a thioester bond is hydrolyzed and mediates the covalent binding of the protein to the proteinase. This Mus musculus (Mouse) protein is Pregnancy zone protein (Pzp).